The following is a 311-amino-acid chain: Methionyl-tRNA formyltransferase (311 aa).

(6S)-5,6,7,8-tetrahydrofolate is bound at residue 110-113 (SLLP).

This sequence belongs to the Fmt family.

The catalysed reaction is L-methionyl-tRNA(fMet) + (6R)-10-formyltetrahydrofolate = N-formyl-L-methionyl-tRNA(fMet) + (6S)-5,6,7,8-tetrahydrofolate + H(+). Functionally, attaches a formyl group to the free amino group of methionyl-tRNA(fMet). The formyl group appears to play a dual role in the initiator identity of N-formylmethionyl-tRNA by promoting its recognition by IF2 and preventing the misappropriation of this tRNA by the elongation apparatus. This is Methionyl-tRNA formyltransferase from Streptococcus pyogenes serotype M2 (strain MGAS10270).